Consider the following 371-residue polypeptide: MKMTFRWFGKDYDTVSLDHIRQIPGVEGIVGALYHIPVGEVWPLEDILELKRQVNKNGFHLEVIESVNVHEDIKLGLPSRERYIENYKQTIRNLSKAGVKVICYNFMPIFDWTRSDLAKRRPDGSTVLAYEKQKVEQIDPEEMIRRIENGANGFLLPGWEPERLKTIKPLFALYKGVTEDDLLDHLRYFLEQIVPVAEECGIQMAIHPDDPPWSVFGLPRIVTNKENLKKIINMVNSPANGLTLCSGSLGANPDNDIPDIFRYFLRMGRVPFVHVRNIEIHTNGDFEETSHRSCDGSLNICEIVKVLHESDFQGYIRPDHGRMIWGEQARPGYGLYDRALGIMYLLGIWDSLENEKRKREGDKTCSQSIQV.

This sequence belongs to the mannonate dehydratase family. Fe(2+) serves as cofactor. The cofactor is Mn(2+).

It catalyses the reaction D-mannonate = 2-dehydro-3-deoxy-D-gluconate + H2O. Its pathway is carbohydrate metabolism; pentose and glucuronate interconversion. Its function is as follows. Catalyzes the dehydration of D-mannonate. The polypeptide is Mannonate dehydratase (Geobacillus thermodenitrificans (strain NG80-2)).